The sequence spans 500 residues: Cytochrome P450 11B2, mitochondrial (500 aa).

The N-terminal 24 residues, 1-24 (MALRAKADVWLARPWQCLPRTRAL), are a transit peptide targeting the mitochondrion. A 21-hydroxyprogesterone-binding site is contributed by Phe-381. Cys-447 is a heme binding site.

The protein belongs to the cytochrome P450 family. It depends on heme as a cofactor. In terms of tissue distribution, adrenal gland.

The protein resides in the mitochondrion inner membrane. The catalysed reaction is a steroid + 2 reduced [adrenodoxin] + O2 + 2 H(+) = an 11beta-hydroxysteroid + 2 oxidized [adrenodoxin] + H2O. The enzyme catalyses 21-hydroxyprogesterone + 2 reduced [adrenodoxin] + O2 + 2 H(+) = corticosterone + 2 oxidized [adrenodoxin] + H2O. It catalyses the reaction corticosterone + 2 reduced [adrenodoxin] + O2 + 2 H(+) = 18-hydroxycorticosterone + 2 oxidized [adrenodoxin] + H2O. It carries out the reaction 18-hydroxycorticosterone + 2 reduced [adrenodoxin] + O2 + 2 H(+) = aldosterone + 2 oxidized [adrenodoxin] + 2 H2O. The catalysed reaction is 11-deoxycortisol + 2 reduced [adrenodoxin] + O2 + 2 H(+) = cortisol + 2 oxidized [adrenodoxin] + H2O. The enzyme catalyses 21-hydroxyprogesterone + 2 reduced [adrenodoxin] + O2 + 2 H(+) = 18-hydroxy-11-deoxycorticosterone + 2 oxidized [adrenodoxin] + H2O. It catalyses the reaction cortisol + 2 reduced [adrenodoxin] + O2 + 2 H(+) = 18-hydroxycortisol + 2 oxidized [adrenodoxin] + H2O. It carries out the reaction 18-hydroxycortisol + 2 reduced [adrenodoxin] + O2 + 2 H(+) = 18-oxocortisol + 2 oxidized [adrenodoxin] + 2 H2O. It participates in steroid biosynthesis. A cytochrome P450 monooxygenase that catalyzes the biosynthesis of aldosterone, the main mineralocorticoid in the human body responsible for salt and water homeostasis, thus involved in blood pressure regulation, arterial hypertension, and the development of heart failure. Catalyzes three sequential oxidative reactions of 11-deoxycorticosterone (21-hydroxyprogesterone), namely 11-beta hydroxylation, followed by two successive oxidations at C18 yielding 18-hydroxy and then 18-oxo intermediates (that would not leave the enzyme active site during the consecutive hydroxylation reactions), ending with the formation of aldosterone. Can also produce 18-hydroxycortisol and 18-oxocortisol, derived from successive oxidations of cortisol at C18, normally found at very low levels, but significantly increased in primary aldosteronism, the most common form of secondary hypertension. Mechanistically, uses molecular oxygen inserting one oxygen atom into a substrate and reducing the second into a water molecule. Two electrons are provided by NADPH via a two-protein mitochondrial transfer system comprising flavoprotein FDXR (adrenodoxin/ferredoxin reductase) and nonheme iron-sulfur protein FDX1 or FDX2 (adrenodoxin/ferredoxin). Could also be involved in the androgen metabolic pathway. The chain is Cytochrome P450 11B2, mitochondrial (CYP11B2) from Mesocricetus auratus (Golden hamster).